Here is a 338-residue protein sequence, read N- to C-terminus: Nucleoid-associated protein HI_0839 (338 aa).

Belongs to the YejK family.

The protein localises to the cytoplasm. It localises to the nucleoid. The protein is Nucleoid-associated protein HI_0839 of Haemophilus influenzae (strain ATCC 51907 / DSM 11121 / KW20 / Rd).